We begin with the raw amino-acid sequence, 337 residues long: Putative 2-aminoethylphosphonate-binding periplasmic protein (337 aa).

An N-terminal signal peptide occupies residues 1 to 21 (MKLSRLALLSVFALASAPSWA).

The protein belongs to the bacterial solute-binding protein 1 family.

Its subcellular location is the periplasm. In terms of biological role, probably part of the PhnSTUV complex (TC 3.A.1.11.5) involved in 2-aminoethylphosphonate import. The protein is Putative 2-aminoethylphosphonate-binding periplasmic protein (phnS) of Salmonella typhi.